The sequence spans 211 residues: FMN-dependent NADH:quinone oxidoreductase (211 aa).

17 to 19 (SYS) is a binding site for FMN.

Belongs to the azoreductase type 1 family. In terms of assembly, homodimer. FMN serves as cofactor.

The catalysed reaction is 2 a quinone + NADH + H(+) = 2 a 1,4-benzosemiquinone + NAD(+). It carries out the reaction N,N-dimethyl-1,4-phenylenediamine + anthranilate + 2 NAD(+) = 2-(4-dimethylaminophenyl)diazenylbenzoate + 2 NADH + 2 H(+). Quinone reductase that provides resistance to thiol-specific stress caused by electrophilic quinones. In terms of biological role, also exhibits azoreductase activity. Catalyzes the reductive cleavage of the azo bond in aromatic azo compounds to the corresponding amines. The sequence is that of FMN-dependent NADH:quinone oxidoreductase from Bacillus pumilus (strain SAFR-032).